A 313-amino-acid polypeptide reads, in one-letter code: Lactamase-like protein ptaB (313 aa).

Zn(2+) contacts are provided by histidine 104, histidine 106, aspartate 108, and histidine 109. Residue aspartate 108 is the Proton donor/acceptor of the active site.

Belongs to the metallo-beta-lactamase superfamily. It depends on Zn(2+) as a cofactor.

It carries out the reaction atrochrysone carboxyl-[ACP] + H2O = atrochrysone carboxylate + holo-[ACP] + H(+). Its pathway is secondary metabolite biosynthesis. Its function is as follows. Lactamase-like protein; part of the gene cluster that mediates the biosynthesis of pestheic acid, a diphenyl ether which is a biosynthetic precursor of the unique chloropupukeananes. The biosynthesis initiates from condensation of acetate and malonate units catalyzed by the non-reducing PKS ptaA. As the ptaA protein is TE/CLC domain-deficient, hydrolysis and Claisen cyclization of the polyketide could be catalyzed by ptaB containing a beta-lactamase domain. The ptaB protein might hydrolyze the thioester bond between the ACP of ptaA and the intermediate to release atrochrysone carboxylic acid, which is spontaneously dehydrated to form endocrocin anthrone. Endocrocin anthrone is then converted to endocrocin, catalyzed by the anthrone oxygenase ptaC. Spontaneous decarboxylation of endocrocin occurs to generate emodin. An O-methyltransferase (ptaH or ptaI) could methylate emodin to form physcion. PtaJ could then catalyze the oxidative cleavage of physcion, and rotation of the intermediate could then afford desmethylisosulochrin. PtaF, a putative NADH-dependent oxidoreductase, might also participate in the oxidative cleavage step. Desmethylisosulochrin is then transformed by another O-methyltransferase (ptaH or ptaI) to form isosulochrin. Chlorination of isosulochrin by ptaM in the cyclohexadienone B ring then produces chloroisosulochrin. PtaE is responsible for the oxidative coupling reactions of both benzophenones isosulochrin and chloroisosulochrin to RES-1214-1 and pestheic acid respectively, regardless of chlorination. In Pestalotiopsis fici (strain W106-1 / CGMCC3.15140), this protein is Lactamase-like protein ptaB.